A 115-amino-acid chain; its full sequence is Nitrogen regulatory protein P-II 1 (115 aa).

O-UMP-tyrosine is present on tyrosine 54.

Belongs to the P(II) protein family.

In terms of biological role, could be involved in the regulation of nitrogen fixation. The sequence is that of Nitrogen regulatory protein P-II 1 from Methanothermobacter thermautotrophicus (strain ATCC 29096 / DSM 1053 / JCM 10044 / NBRC 100330 / Delta H) (Methanobacterium thermoautotrophicum).